A 98-amino-acid polypeptide reads, in one-letter code: Putative transcriptional regulator YdaS (98 aa).

Functionally, when overexpressed, it induces Rac prophage excision, possibly to counteract the lethal toxicity of YdaT. Overexpression of ydaS or ydaST reduces growth and leads to loss of cell viability. May contribute to toxicity and morphological defects. In Escherichia coli (strain K12), this protein is Putative transcriptional regulator YdaS (ydaS).